We begin with the raw amino-acid sequence, 479 residues long: ATP-dependent protease ATPase subunit HslU (479 aa).

ATP is bound by residues Ile32, Gly74 to Glu79, Asp290, Glu355, and Arg427.

This sequence belongs to the ClpX chaperone family. HslU subfamily. In terms of assembly, a double ring-shaped homohexamer of HslV is capped on each side by a ring-shaped HslU homohexamer. The assembly of the HslU/HslV complex is dependent on binding of ATP.

It is found in the cytoplasm. Functionally, ATPase subunit of a proteasome-like degradation complex; this subunit has chaperone activity. The binding of ATP and its subsequent hydrolysis by HslU are essential for unfolding of protein substrates subsequently hydrolyzed by HslV. HslU recognizes the N-terminal part of its protein substrates and unfolds these before they are guided to HslV for hydrolysis. This Leptospira interrogans serogroup Icterohaemorrhagiae serovar copenhageni (strain Fiocruz L1-130) protein is ATP-dependent protease ATPase subunit HslU.